We begin with the raw amino-acid sequence, 248 residues long: Large ribosomal subunit protein uL30 (248 aa).

An N-acetylmethionine modification is found at methionine 1. Repeat copies occupy residues 7 to 18 (KKKEVPAVPETL), 19 to 30 (KKKRRNFAELKI), 31 to 42 (KRLRKKFAQKML), and 43 to 54 (RKARRKLIYEKA). Positions 7–54 (KKKEVPAVPETLKKKRRNFAELKIKRLRKKFAQKMLRKARRKLIYEKA) are 4 X 12 AA tandem repeats. A Phosphothreonine modification is found at threonine 17. Position 124 is an N6-acetyllysine (lysine 124). Residue lysine 127 is modified to N6-succinyllysine. Tyrosine 139 is modified (phosphotyrosine).

The protein belongs to the universal ribosomal protein uL30 family. Component of the large ribosomal subunit. Homodimer. Interacts with DHX33.

It localises to the cytoplasm. Its function is as follows. Component of the large ribosomal subunit. The ribosome is a large ribonucleoprotein complex responsible for the synthesis of proteins in the cell. Binds to G-rich structures in 28S rRNA and in mRNAs. Plays a regulatory role in the translation apparatus; inhibits cell-free translation of mRNAs. This is Large ribosomal subunit protein uL30 (RPL7) from Homo sapiens (Human).